Here is a 431-residue protein sequence, read N- to C-terminus: Acrosin (431 aa).

The N-terminal stretch at 1 to 16 (MLPTAVLLVLVVSVVA) is a signal peptide. A glycan (N-linked (GlcNAc...) asparagine) is linked at asparagine 19. 6 disulfides stabilise this stretch: cysteine 22/cysteine 152, cysteine 26/cysteine 160, cysteine 71/cysteine 87, cysteine 175/cysteine 244, cysteine 207/cysteine 223, and cysteine 234/cysteine 264. Residues 40–288 (VVGGQAAQQG…FLDWIASRIG (249 aa)) enclose the Peptidase S1 domain. Active-site charge relay system residues include histidine 86 and aspartate 140. N-linked (GlcNAc...) asparagine glycosylation occurs at asparagine 208. The Charge relay system role is filled by serine 238. Positions 295 to 385 (IQPATPTPPT…PPPASTKPPQ (91 aa)) are disordered. The segment covering 331 to 341 (PHPHPHPHPHP) has biased composition (basic residues). Residues 342–381 (RPPQPPAAQAPPPPPPPPPPPPPPPPPPPPPPPPPPPAST) are compositionally biased toward pro residues. Positions 351–431 (APPPPPPPPP…TEIPEVTLAS (81 aa)) are cleaved as a propeptide — pro-rich.

The protein belongs to the peptidase S1 family. As to quaternary structure, heavy chain (catalytic) and a light chain linked by two disulfide bonds. Forms a heterodimer with SERPINA5.

It carries out the reaction Preferential cleavage: Arg-|-Xaa, Lys-|-Xaa.. Its activity is regulated as follows. Inhibited by SERPINA5. Acrosin is the major protease of mammalian spermatozoa. It is a serine protease of trypsin-like cleavage specificity, it is synthesized in a zymogen form, proacrosin and stored in the acrosome. The sequence is that of Acrosin (ACR) from Oryctolagus cuniculus (Rabbit).